The sequence spans 133 residues: Glycophorin-A (133 aa).

O-linked (GalNAc...) threonine glycosylation is found at Thr-1 and Thr-6. The segment at 1 to 34 is disordered; the sequence is TETPVTGEQGSATPGNVSNATVTAGKPSATSPGV. Topologically, residues 1-62 are extracellular; that stretch reads TETPVTGEQG…SYHQDFSHAE (62 aa). Ser-11 is a glycosylation site (O-linked (GalNAc...) serine). Residue Thr-13 is glycosylated (O-linked (GalNAc...) threonine). Asn-19 carries an N-linked (GlcNAc...) asparagine glycan. O-linked (GalNAc...) threonine glycans are attached at residues Thr-21, Thr-23, and Thr-30. O-linked (GalNAc...) serine glycosylation is present at Ser-31. N-linked (GlcNAc...) asparagine glycosylation occurs at Asn-39. O-linked (GalNAc...) threonine glycosylation is found at Thr-41 and Thr-48. Residues 63-85 traverse the membrane as a helical segment; sequence ITGIIFAVMAGLLLIIFLIAYLI. Residues 86 to 133 are Cytoplasmic-facing; sequence RRMIKKPLPVPKPQDSPDIGTENTADPSELQDTEDPPLTSVEIETPAS. The tract at residues 93-133 is disordered; sequence LPVPKPQDSPDIGTENTADPSELQDTEDPPLTSVEIETPAS.

It belongs to the glycophorin-A family. Homodimer. Component of the ankyrin-1 complex in the erythrocyte, composed of ANK1, RHCE, RHAG, SLC4A1, EPB42, GYPA, GYPB and AQP1. Interacts with SLC4A1; a GYPA monomer is bound at each end of the SLC4A1 dimer forming a heterotetramer.

Its subcellular location is the membrane. Component of the ankyrin-1 complex, a multiprotein complex involved in the stability and shape of the erythrocyte membrane. Glycophorin A is the major intrinsic membrane protein of the erythrocyte. The N-terminal glycosylated segment, which lies outside the erythrocyte membrane, has MN blood group receptors. Appears to be important for the function of SLC4A1 and is required for high activity of SLC4A1. May be involved in translocation of SLC4A1 to the plasma membrane. The chain is Glycophorin-A from Sus scrofa (Pig).